The chain runs to 823 residues: Dimethyl sulfoxide/trimethylamine N-oxide reductase (823 aa).

The segment at residues 1–42 is a signal peptide (tat-type signal); that stretch reads MTKFSGNELRAELYRRAFLSYSVAPGALGMFGRSLLAKGARA. Mo-bis(molybdopterin guanine dinucleotide)-binding positions include 156 to 160, Trp-158, Ser-189, 232 to 233, 262 to 263, 283 to 285, 364 to 365, Arg-368, Asn-476, His-480, 500 to 501, Arg-523, Asp-553, 685 to 686, 691 to 693, Asn-779, and 796 to 797; these read YGWKS, KT, ID, QTD, WS, HD, HP, HSQ, and GQ.

As to quaternary structure, homodimer. The cofactor is Mo-bis(molybdopterin guanine dinucleotide). Predicted to be exported by the Tat system. The position of the signal peptide cleavage has been experimentally proven.

It localises to the periplasm. The catalysed reaction is dimethyl sulfide + a menaquinone + H2O = dimethyl sulfoxide + a menaquinol. It catalyses the reaction trimethylamine + 2 Fe(III)-[cytochrome c] + H2O = trimethylamine N-oxide + 2 Fe(II)-[cytochrome c] + 3 H(+). Catalyzes the reduction of dimethyl sulfoxide (DMSO) and trimethylamine N-oxide (TMAO) to dimethyl sulfide (DMS) and trimethylamine, respectively. The terminal DMSO reductase can also use various sulfoxides and N-oxide compounds as terminal electron acceptor in addition to DMSO and TMAO. The chain is Dimethyl sulfoxide/trimethylamine N-oxide reductase (dorA) from Rhodobacter capsulatus (Rhodopseudomonas capsulata).